Consider the following 198-residue polypeptide: 5'-deoxynucleotidase hdd1 (198 aa).

The 107-residue stretch at 38 to 144 folds into the HD domain; sequence IADHMYRMGI…VKDIDKFEMI (107 aa). A divalent metal cation contacts are provided by histidine 41, histidine 69, aspartate 70, glutamate 73, aspartate 78, isoleucine 79, and aspartate 139.

The protein belongs to the HDDC2 family. As to quaternary structure, homodimer. The cofactor is Mn(2+). Requires Co(2+) as cofactor. Mg(2+) serves as cofactor.

It is found in the cytoplasm. The protein resides in the nucleus. It carries out the reaction a 2'-deoxyribonucleoside 5'-phosphate + H2O = a 2'-deoxyribonucleoside + phosphate. In terms of biological role, catalyzes the dephosphorylation of the nucleoside 5'-monophosphates deoxyadenosine monophosphate (dAMP), deoxycytidine monophosphate (dCMP), deoxyguanosine monophosphate (dGMP) and deoxythymidine monophosphate (dTMP). This chain is 5'-deoxynucleotidase hdd1, found in Schizosaccharomyces pombe (strain 972 / ATCC 24843) (Fission yeast).